The chain runs to 180 residues: Nucleoside triphosphate/diphosphate phosphatase (180 aa).

R26 serves as the catalytic Proton donor. The Mg(2+) site is built by N90, D106, D108, D110, D123, and E126.

Belongs to the Ntdp family. Mg(2+) serves as cofactor.

It carries out the reaction a ribonucleoside 5'-triphosphate + H2O = a ribonucleoside 5'-diphosphate + phosphate + H(+). It catalyses the reaction a ribonucleoside 5'-diphosphate + H2O = a ribonucleoside 5'-phosphate + phosphate + H(+). Its function is as follows. Has nucleoside phosphatase activity towards nucleoside triphosphates and nucleoside diphosphates. The protein is Nucleoside triphosphate/diphosphate phosphatase of Staphylococcus saprophyticus subsp. saprophyticus (strain ATCC 15305 / DSM 20229 / NCIMB 8711 / NCTC 7292 / S-41).